A 635-amino-acid polypeptide reads, in one-letter code: MITVRLPDGSQREFDTPVTVAQVAANIGTGLAKAALAGKVNGDVVDTSYLIEKDSDLAIITDKDAEGIDVIRHSTAHLLAYAVKELFPDAQVTIGPVIDNGFYYDFSYKRPFTPEDLVAIEKKMTELAKKDEPVTRKVMPRDEAVAYFKSIGEAYKAEIIESIPADQEVSLYTEGKFTDLCRGPHVPSTGKLKVFKLMKLAGAYWRGDSKNEMLQRIYGTAWAKKEEQEAYLHMLEEAEKRDHRKLGKQLDFFHFQEEAPGLIFWHPKGWSIWQQVEQYMRKVYQDNDYQEVKAPQILDRGLWEKTGHWDNYRENMFVTESENRSYALKPMNCPGHVQIYNSDMRSYRDLPLRYGEFGQCHRNEPSGALHGMMRVRGFTQDDGHIFCTEEQIAEEVTAFHAQAMAVYAAFGFENIDVKLALRPDSRIGTEESWDIAEESLRSALRACGVSWTELPGEGAFYGPKIEYHLKDSLGRAWQVGTVQIDPSMPGRLGAEYVAVDNTRKTPIMLHRAIVGSLERFIGILIEHYAGALPLWLAPVQIAVLNISDAQAEYAQAVAQNLKKQGFRVHLDLRNEKITYKIREHSVQKLPYIIVIGDKERDAGTVAVRARGNVDLGVMPVDLLVDRLNSEIDAKA.

The 61-residue stretch at 1–61 (MITVRLPDGS…EKDSDLAIIT (61 aa)) folds into the TGS domain. Residues 242–533 (DHRKLGKQLD…LIEHYAGALP (292 aa)) are catalytic. Zn(2+)-binding residues include cysteine 333, histidine 384, and histidine 510.

This sequence belongs to the class-II aminoacyl-tRNA synthetase family. Homodimer. Zn(2+) serves as cofactor.

The protein localises to the cytoplasm. It catalyses the reaction tRNA(Thr) + L-threonine + ATP = L-threonyl-tRNA(Thr) + AMP + diphosphate + H(+). In terms of biological role, catalyzes the attachment of threonine to tRNA(Thr) in a two-step reaction: L-threonine is first activated by ATP to form Thr-AMP and then transferred to the acceptor end of tRNA(Thr). Also edits incorrectly charged L-seryl-tRNA(Thr). The protein is Threonine--tRNA ligase of Janthinobacterium sp. (strain Marseille) (Minibacterium massiliensis).